Consider the following 241-residue polypeptide: Synaptogyrin (241 aa).

Residues 30-179 form the MARVEL domain; it reads FAMKPQVVIR…CALMAYKRFL (150 aa). Transmembrane regions (helical) follow at residues 34 to 54, 81 to 101, 115 to 135, and 155 to 175; these read PQVVIRALCWLFSVVVFGCIS, MVGVFGFLASMGFMGGEFLFE, ADMGFSALWTFMYFVAFLYLW, and TAIWFCLFSIVSWALCALMAY. Positions 216 to 241 are disordered; it reads ASPFGQPQQGGMEQQQSGMEYQQPTY. Low complexity predominate over residues 220-241; the sequence is GQPQQGGMEQQQSGMEYQQPTY.

The protein belongs to the synaptogyrin family.

The protein resides in the cytoplasmic vesicle membrane. It localises to the cytoplasmic vesicle. Its subcellular location is the secretory vesicle membrane. It is found in the secretory vesicle. The protein localises to the synaptic vesicle membrane. In terms of biological role, required for the correct formation of synaptic vesicles at nerve terminals and has a role in the regulation of the synaptic vesicle exo-endocytic cycle. The protein is Synaptogyrin of Drosophila melanogaster (Fruit fly).